The chain runs to 101 residues: Small ribosomal subunit protein uS14A (101 aa).

2 disordered regions span residues Met-1–Ala-21 and Gln-49–Thr-73. 2 stretches are compositionally biased toward basic and acidic residues: residues Ala-8–Ala-21 and Arg-61–Pro-70.

The protein belongs to the universal ribosomal protein uS14 family. In terms of assembly, part of the 30S ribosomal subunit. Contacts proteins S3 and S10.

Binds 16S rRNA, required for the assembly of 30S particles and may also be responsible for determining the conformation of the 16S rRNA at the A site. The polypeptide is Small ribosomal subunit protein uS14A (Kineococcus radiotolerans (strain ATCC BAA-149 / DSM 14245 / SRS30216)).